Here is a 473-residue protein sequence, read N- to C-terminus: Hyaluronidase-2 (473 aa).

The signal sequence occupies residues 1-20 (MWTGLGPAVTLALVLVVAWA). Cystine bridges form between Cys-47-Cys-343 and Cys-214-Cys-230. N-linked (GlcNAc...) asparagine glycans are attached at residues Asn-77 and Asn-106. The active-site Proton donor is the Glu-138. Residues Asn-340 and Asn-360 are each glycosylated (N-linked (GlcNAc...) asparagine). In terms of domain architecture, EGF-like spans 364–442 (AAQYCSWAQC…YLGWGGEQCQ (79 aa)). 3 disulfides stabilise this stretch: Cys-368–Cys-379, Cys-373–Cys-430, and Cys-432–Cys-441. A lipid anchor (GPI-anchor amidated glycine) is attached at Gly-451. A propeptide spans 452–473 (ASGAWAGSHLTGLLAVAVLAFT) (removed in mature form).

Belongs to the glycosyl hydrolase 56 family. In terms of assembly, interacts with MST1R.

Its subcellular location is the cell membrane. The catalysed reaction is Random hydrolysis of (1-&gt;4)-linkages between N-acetyl-beta-D-glucosamine and D-glucuronate residues in hyaluronate.. Functionally, catalyzes hyaluronan degradation into small fragments that are endocytosed and degraded in lysosomes by HYAL1 and exoglycosidases. Essential for the breakdown of extracellular matrix hyaluronan. The chain is Hyaluronidase-2 (HYAL2) from Bos taurus (Bovine).